Reading from the N-terminus, the 229-residue chain is MSLLVQLDQKIAANGGLIVSCQPVPDSPLDKPEIVAAMALAAEQAGAVAIRIEGVANLQATRAVVSVPIIGIVKRDLEDSPVRITAYIEDVDALAQAGADIIAIDGTDRPRPVPVETLLARIHHHGLLAMTDCSTPEDGLACQKLGAEIIGTTLSGYTTPETPEEPDLALVKTLSDAGCRVIAEGRYNTPAQAADAMRHGAWAVTVGSAITRLEHICQWYNTAMKKAVL.

Belongs to the NanE family.

The enzyme catalyses an N-acyl-D-glucosamine 6-phosphate = an N-acyl-D-mannosamine 6-phosphate. The protein operates within amino-sugar metabolism; N-acetylneuraminate degradation; D-fructose 6-phosphate from N-acetylneuraminate: step 3/5. Converts N-acetylmannosamine-6-phosphate (ManNAc-6-P) to N-acetylglucosamine-6-phosphate (GlcNAc-6-P). In Escherichia coli O7:K1 (strain IAI39 / ExPEC), this protein is Putative N-acetylmannosamine-6-phosphate 2-epimerase.